Here is a 141-residue protein sequence, read N- to C-terminus: Hemoglobin subunit alpha (141 aa).

Residues 1–141 form the Globin domain; the sequence is VLSSKDKANV…VSTVLTSKYR (141 aa). Phosphoserine is present on S3. 2 positions are modified to N6-succinyllysine: K7 and K11. K16 is modified (N6-acetyllysine; alternate). Position 16 is an N6-succinyllysine; alternate (K16). Y24 is modified (phosphotyrosine). An N6-succinyllysine modification is found at K40. S49 carries the post-translational modification Phosphoserine. H58 provides a ligand contact to O2. H87 is a heme b binding site. Residue S102 is modified to Phosphoserine. Residue T108 is modified to Phosphothreonine. Position 124 is a phosphoserine (S124). A phosphothreonine mark is found at T134 and T137. A Phosphoserine modification is found at S138.

This sequence belongs to the globin family. Heterotetramer of two alpha chains and two beta chains. As to expression, red blood cells.

Involved in oxygen transport from the lung to the various peripheral tissues. In terms of biological role, hemopressin acts as an antagonist peptide of the cannabinoid receptor CNR1. Hemopressin-binding efficiently blocks cannabinoid receptor CNR1 and subsequent signaling. The chain is Hemoglobin subunit alpha (HBA) from Lama vicugna (Vicugna).